The sequence spans 349 residues: MQTTINNGQTSSKETLLTPRFYTTDFEEMANMDISGNQEDFLAILEEFRADYNSEHFIRDEEFNQSWSNLEHKTKSLFIEFLERSCTAEFSGFLLYKELSRKLKDRNPVIAECFLLMSRDEARHAGFLNKAIGDFNLSLDLGFLTKSRKYTFFSPKFIFYATYLSEKIGYWRYITIYRHLEQHPEHRIYPIFRFFENWCQDENRHGDFFAALLKSQPHFLNDWKAKMWCRFFLLSVFATMYLNDFQRIDFYNAIGLDSRQYDMQVIRKTNESAARVFPVALDVDNPKFFKYLDTCACDNRALIDIDNNNSPLFIKSIVKIPLYFSLFANLLKIYLIKPIDSKTVWNTVR.

Belongs to the AcsF family. It depends on Fe cation as a cofactor.

Its subcellular location is the plastid. The protein resides in the chloroplast. It carries out the reaction Mg-protoporphyrin IX 13-monomethyl ester + 3 NADPH + 3 O2 + 2 H(+) = 3,8-divinyl protochlorophyllide a + 3 NADP(+) + 5 H2O. It participates in porphyrin-containing compound metabolism; chlorophyll biosynthesis (light-independent). In terms of biological role, catalyzes the formation of the isocyclic ring in chlorophyll biosynthesis. Mediates the cyclase reaction, which results in the formation of divinylprotochlorophyllide (Pchlide) characteristic of all chlorophylls from magnesium-protoporphyrin IX 13-monomethyl ester (MgPMME). In Pyropia yezoensis (Susabi-nori), this protein is Magnesium-protoporphyrin IX monomethyl ester [oxidative] cyclase.